The primary structure comprises 432 residues: Adenylosuccinate synthetase (432 aa).

GTP is bound by residues 13-19 (GDEGKGK) and 41-43 (GHT). D14 serves as the catalytic Proton acceptor. Residues D14 and G41 each coordinate Mg(2+). IMP-binding positions include 14–17 (DEGK), 39–42 (NAGH), T130, R144, Q225, T240, and R304. H42 acts as the Proton donor in catalysis. Residue 300 to 306 (AVTGRPR) participates in substrate binding. GTP is bound by residues R306, 332–334 (KLD), and 415–417 (STG).

This sequence belongs to the adenylosuccinate synthetase family. In terms of assembly, homodimer. Mg(2+) is required as a cofactor.

The protein localises to the cytoplasm. It catalyses the reaction IMP + L-aspartate + GTP = N(6)-(1,2-dicarboxyethyl)-AMP + GDP + phosphate + 2 H(+). Its pathway is purine metabolism; AMP biosynthesis via de novo pathway; AMP from IMP: step 1/2. Its function is as follows. Plays an important role in the de novo pathway of purine nucleotide biosynthesis. Catalyzes the first committed step in the biosynthesis of AMP from IMP. The polypeptide is Adenylosuccinate synthetase (Glaesserella parasuis serovar 5 (strain SH0165) (Haemophilus parasuis)).